A 494-amino-acid chain; its full sequence is Glutamyl-tRNA(Gln) amidotransferase subunit A (494 aa).

Residues Lys81 and Ser156 each act as charge relay system in the active site. Ser180 serves as the catalytic Acyl-ester intermediate.

It belongs to the amidase family. GatA subfamily. In terms of assembly, heterotrimer of A, B and C subunits.

The catalysed reaction is L-glutamyl-tRNA(Gln) + L-glutamine + ATP + H2O = L-glutaminyl-tRNA(Gln) + L-glutamate + ADP + phosphate + H(+). Functionally, allows the formation of correctly charged Gln-tRNA(Gln) through the transamidation of misacylated Glu-tRNA(Gln) in organisms which lack glutaminyl-tRNA synthetase. The reaction takes place in the presence of glutamine and ATP through an activated gamma-phospho-Glu-tRNA(Gln). In Mycobacterium bovis (strain ATCC BAA-935 / AF2122/97), this protein is Glutamyl-tRNA(Gln) amidotransferase subunit A.